The primary structure comprises 312 residues: Glyoxylate/hydroxypyruvate reductase A (312 aa).

Arg-227 is a catalytic residue. Residue His-275 is the Proton donor of the active site.

Belongs to the D-isomer specific 2-hydroxyacid dehydrogenase family. GhrA subfamily.

The protein resides in the cytoplasm. It carries out the reaction glycolate + NADP(+) = glyoxylate + NADPH + H(+). The catalysed reaction is (R)-glycerate + NAD(+) = 3-hydroxypyruvate + NADH + H(+). The enzyme catalyses (R)-glycerate + NADP(+) = 3-hydroxypyruvate + NADPH + H(+). In terms of biological role, catalyzes the NADPH-dependent reduction of glyoxylate and hydroxypyruvate into glycolate and glycerate, respectively. This chain is Glyoxylate/hydroxypyruvate reductase A, found in Klebsiella pneumoniae subsp. pneumoniae (strain ATCC 700721 / MGH 78578).